The following is a 189-amino-acid chain: Large ribosomal subunit protein bL12c (189 aa).

Disordered stretches follow at residues 1 to 30 (MAAT…HPQP) and 165 to 189 (EGVS…VSIV). A chloroplast-targeting transit peptide spans 1–56 (MAATTTMATLNLPSLTSHPNSSTFPKHPQPLQFPFRTTTNPISLSSTRTTRLRPIA). The segment covering 11 to 24 (NLPSLTSHPNSSTF) has biased composition (polar residues). The segment covering 165–183 (EGVSKDDAEDAKKQLEDAG) has biased composition (basic and acidic residues).

Component of the chloroplast large ribosomal subunit (LSU). Mature 70S chloroplast ribosomes of higher plants consist of a small (30S) and a large (50S) subunit. The 30S small subunit contains 1 molecule of ribosomal RNA (16S rRNA) and 24 different proteins. The 50S large subunit contains 3 rRNA molecules (23S, 5S and 4.5S rRNA) and 33 different proteins.

The protein localises to the plastid. Its subcellular location is the chloroplast. In terms of biological role, component of the chloroplast ribosome (chloro-ribosome), a dedicated translation machinery responsible for the synthesis of chloroplast genome-encoded proteins, including proteins of the transcription and translation machinery and components of the photosynthetic apparatus. This chain is Large ribosomal subunit protein bL12c (RPL12), found in Spinacia oleracea (Spinach).